Here is a 709-residue protein sequence, read N- to C-terminus: Probable lanosterol 14-alpha demethylase (709 aa).

Residue Cys425 participates in heme binding.

It belongs to the cytochrome P450 family. Heme is required as a cofactor.

It localises to the membrane. It carries out the reaction a 14alpha-methyl steroid + 3 reduced [NADPH--hemoprotein reductase] + 3 O2 = a Delta(14) steroid + formate + 3 oxidized [NADPH--hemoprotein reductase] + 4 H2O + 4 H(+). It functions in the pathway steroid biosynthesis; zymosterol biosynthesis; zymosterol from lanosterol: step 1/6. In terms of biological role, catalyzes the 14-alpha demethylation of obtusifoliol to 4 alpha-methyl-5 alpha-ergosta-8,14,24(28)-trien-3 beta-ol. The polypeptide is Probable lanosterol 14-alpha demethylase (Acanthamoeba polyphaga (Amoeba)).